A 1818-amino-acid chain; its full sequence is Cytadherence high molecular weight protein 2 (1818 aa).

Coiled-coil stretches lie at residues 31–880 (LESA…KQRE), 919–1607 (ELKI…DNKH), 1644–1755 (HLFE…QAVQ), and 1786–1817 (LATQ…QKAA).

Phosphorylated mainly on serine residues.

Functionally, component of the cytoskeleton-like structure which stabilizes the shape of the wall-less Mycoplasma. This cytoskeleton-like network of accessory proteins containing HMW proteins 1 to 5 allows the proper anchoring of cytadhesin proteins in the mycoplasmal membrane at the attachment organelle. The polypeptide is Cytadherence high molecular weight protein 2 (hmw2) (Mycoplasma pneumoniae (strain ATCC 29342 / M129 / Subtype 1) (Mycoplasmoides pneumoniae)).